A 224-amino-acid polypeptide reads, in one-letter code: DNA mismatch repair protein MutH (224 aa).

It belongs to the MutH family.

It localises to the cytoplasm. Functionally, sequence-specific endonuclease that cleaves unmethylated GATC sequences. It is involved in DNA mismatch repair. The protein is DNA mismatch repair protein MutH of Shewanella amazonensis (strain ATCC BAA-1098 / SB2B).